We begin with the raw amino-acid sequence, 267 residues long: Strigolactone esterase RMS3 (267 aa).

The active-site Nucleophile is the serine 96. Active-site residues include aspartate 218 and histidine 247.

The protein belongs to the AB hydrolase superfamily.

It is found in the cytoplasm. The protein resides in the nucleus. Its function is as follows. Involved in strigolactone signaling pathway. Functions downstream of strigolactone synthesis, as a component of hormone signaling and as an enzyme that participates in the conversion of strigolactones to the bioactive form. Binds and hydrolyzes the synthetic strigolactone analog GR24 and its enantiomers in vitro. Forms a stable covalent complex with the D-ring of strigolactone, which is essential for hormone bioactivity. The D-ring is attached to His-247 of the catalytic triad. The hydrolysis of strigolactone into a covalently linked intermediate molecule is required to trigger strigolactone signaling. This mechanism defines RMS3 as a non-canonical hormone receptor with dual functions to generate and sense the active form of strigolactone. Strigolactones are hormones that inhibit tillering and shoot branching through the MAX-dependent pathway, contribute to the regulation of shoot architectural response to phosphate-limiting conditions and function as rhizosphere signal that stimulates hyphal branching of arbuscular mycorrhizal fungi and trigger seed germination of root parasitic weeds. This chain is Strigolactone esterase RMS3, found in Pisum sativum (Garden pea).